The chain runs to 63 residues: DNA gyrase inhibitor YacG (63 aa).

Zn(2+) is bound by residues cysteine 9, cysteine 12, cysteine 28, and cysteine 32.

Belongs to the DNA gyrase inhibitor YacG family. In terms of assembly, interacts with GyrB. It depends on Zn(2+) as a cofactor.

Its function is as follows. Inhibits all the catalytic activities of DNA gyrase by preventing its interaction with DNA. Acts by binding directly to the C-terminal domain of GyrB, which probably disrupts DNA binding by the gyrase. In Salmonella arizonae (strain ATCC BAA-731 / CDC346-86 / RSK2980), this protein is DNA gyrase inhibitor YacG.